The primary structure comprises 292 residues: ATP synthase gamma chain (292 aa).

Belongs to the ATPase gamma chain family. F-type ATPases have 2 components, CF(1) - the catalytic core - and CF(0) - the membrane proton channel. CF(1) has five subunits: alpha(3), beta(3), gamma(1), delta(1), epsilon(1). CF(0) has three main subunits: a, b and c.

It localises to the cell inner membrane. Its function is as follows. Produces ATP from ADP in the presence of a proton gradient across the membrane. The gamma chain is believed to be important in regulating ATPase activity and the flow of protons through the CF(0) complex. The protein is ATP synthase gamma chain of Methylobacterium sp. (strain 4-46).